The primary structure comprises 244 residues: Small ribosomal subunit protein uS3 (244 aa).

A KH type-2 domain is found at 39 to 110 (IRDYVRKNLS…QIRINVIEVE (72 aa)). The disordered stretch occupies residues 215 to 244 (EDAAPSNVGQPRRRNQQRRRQQFEDRSNEG). Over residues 225-234 (PRRRNQQRRR) the composition is skewed to basic residues. Residues 235-244 (QQFEDRSNEG) are compositionally biased toward basic and acidic residues.

It belongs to the universal ribosomal protein uS3 family. In terms of assembly, part of the 30S ribosomal subunit. Forms a tight complex with proteins S10 and S14.

Functionally, binds the lower part of the 30S subunit head. Binds mRNA in the 70S ribosome, positioning it for translation. The sequence is that of Small ribosomal subunit protein uS3 from Synechococcus sp. (strain ATCC 27144 / PCC 6301 / SAUG 1402/1) (Anacystis nidulans).